The sequence spans 217 residues: UPF0502 protein Smlt0097 (217 aa).

The protein belongs to the UPF0502 family.

The polypeptide is UPF0502 protein Smlt0097 (Stenotrophomonas maltophilia (strain K279a)).